The following is a 156-amino-acid chain: Ribonuclease H (156 aa).

Residues 1–142 (MGKQVEIFTD…CDELARAAAN (142 aa)) enclose the RNase H type-1 domain. Asp-10, Glu-48, Asp-70, and Asp-134 together coordinate Mg(2+).

Belongs to the RNase H family. Monomer. It depends on Mg(2+) as a cofactor.

Its subcellular location is the cytoplasm. It catalyses the reaction Endonucleolytic cleavage to 5'-phosphomonoester.. Functionally, endonuclease that specifically degrades the RNA of RNA-DNA hybrids. The chain is Ribonuclease H from Photorhabdus luminescens (Xenorhabdus luminescens).